The primary structure comprises 130 residues: Iron-sulfur cluster insertion protein ErpA (130 aa).

Residues Cys46, Cys116, and Cys118 each contribute to the iron-sulfur cluster site.

This sequence belongs to the HesB/IscA family. In terms of assembly, homodimer. Iron-sulfur cluster serves as cofactor.

Functionally, required for insertion of 4Fe-4S clusters for at least IspG. This chain is Iron-sulfur cluster insertion protein ErpA, found in Legionella pneumophila (strain Paris).